Reading from the N-terminus, the 198-residue chain is Large ribosomal subunit protein uL23c (198 aa).

A chloroplast-targeting transit peptide spans M1–Q76.

This sequence belongs to the universal ribosomal protein uL23 family. Component of the chloroplast large ribosomal subunit (LSU). Mature 70S chloroplast ribosomes of higher plants consist of a small (30S) and a large (50S) subunit. The 30S small subunit contains 1 molecule of ribosomal RNA (16S rRNA) and 24 different proteins. The 50S large subunit contains 3 rRNA molecules (23S, 5S and 4.5S rRNA) and 33 different proteins.

The protein localises to the plastid. Its subcellular location is the chloroplast. Component of the chloroplast ribosome (chloro-ribosome), a dedicated translation machinery responsible for the synthesis of chloroplast genome-encoded proteins, including proteins of the transcription and translation machinery and components of the photosynthetic apparatus. The protein is Large ribosomal subunit protein uL23c (RPL23) of Spinacia oleracea (Spinach).